We begin with the raw amino-acid sequence, 191 residues long: Peptidyl-tRNA hydrolase (191 aa).

TRNA is bound at residue Y17. Residue H22 is the Proton acceptor of the active site. 3 residues coordinate tRNA: Y68, N70, and N116.

The protein belongs to the PTH family. In terms of assembly, monomer.

Its subcellular location is the cytoplasm. It catalyses the reaction an N-acyl-L-alpha-aminoacyl-tRNA + H2O = an N-acyl-L-amino acid + a tRNA + H(+). Hydrolyzes ribosome-free peptidyl-tRNAs (with 1 or more amino acids incorporated), which drop off the ribosome during protein synthesis, or as a result of ribosome stalling. Functionally, catalyzes the release of premature peptidyl moieties from peptidyl-tRNA molecules trapped in stalled 50S ribosomal subunits, and thus maintains levels of free tRNAs and 50S ribosomes. The protein is Peptidyl-tRNA hydrolase of Mycolicibacterium smegmatis (strain ATCC 700084 / mc(2)155) (Mycobacterium smegmatis).